Here is a 234-residue protein sequence, read N- to C-terminus: ATP-dependent dethiobiotin synthetase BioD (234 aa).

Position 12 to 17 (12 to 17 (DVGKTI)) interacts with ATP. Residue T16 participates in Mg(2+) binding. The active site involves K37. Substrate is bound at residue T41. ATP-binding positions include D54 and 115–118 (EGAG). Positions 54 and 115 each coordinate Mg(2+).

Belongs to the dethiobiotin synthetase family. In terms of assembly, homodimer. The cofactor is Mg(2+).

The protein localises to the cytoplasm. It catalyses the reaction (7R,8S)-7,8-diammoniononanoate + CO2 + ATP = (4R,5S)-dethiobiotin + ADP + phosphate + 3 H(+). It participates in cofactor biosynthesis; biotin biosynthesis; biotin from 7,8-diaminononanoate: step 1/2. Functionally, catalyzes a mechanistically unusual reaction, the ATP-dependent insertion of CO2 between the N7 and N8 nitrogen atoms of 7,8-diaminopelargonic acid (DAPA, also called 7,8-diammoniononanoate) to form a ureido ring. This is ATP-dependent dethiobiotin synthetase BioD from Lysinibacillus sphaericus (strain C3-41).